The sequence spans 544 residues: MCVKGDAQLAAAAEISTLQPDAAKELDSFPWLTTAILLPIAASLAIPLVPDPGNGKGVRWYALGVSLTTFLITVGAYLNGYDPDIAGLQLRQVIPWVPDLGLGWSVGADGLSMPLILLTSFITTLACLAAWPVTFKPRLFFFLLLAMDGGQIAVFAVQDMLLFFLAWELELIPVYLLLAIWGGKKRQYAATKFILYTAVSSLFILLVALAMAFSGGGPVSFEYSDLAAKHLGAGFQALCYAGLLIAFGVKLPIVPLHTWLPDAHGEATAPVHMLLAGILLKMGGYALFRFNASMFPDAHVQFAPLLVVLGVVNIIYAALTSFAQRNLKRKIAYSSISHMGFVLIGIGSFSPLAASGAMLQMISHGLIGASLFFLVGATYDRTHTLQLDEMGGVGQRMRKMFAMWTACSLASLALPGMSGFVSELMVFVGFATDDAYTLPFRIVIDGAAAIGVILTPIYLLSMLREIFFGQEKPELSDANLVDAEPREIYIISCLLVPIIGIGLYPKLVTDSYRATIEQVVARDESSMKALTAPYLPLRSAPKLS.

14 helical membrane passes run 29–49, 60–80, 115–135, 139–159, 161–181, 193–213, 234–254, 268–288, 302–322, 339–359, 360–380, 400–422, 442–462, and 488–508; these read FPWL…IPLV, WYAL…YLNG, LILL…PVTF, LFFF…AVQD, LLFF…LAIW, FILY…AMAF, GFQA…LPIV, TAPV…YALF, FAPL…LTSF, MGFV…GAML, QMIS…ATYD, MFAM…GFVS, IVID…LLSM, and IYII…PKLV.

The protein belongs to the complex I subunit 4 family.

Its subcellular location is the cellular thylakoid membrane. It carries out the reaction a plastoquinone + NADH + (n+1) H(+)(in) = a plastoquinol + NAD(+) + n H(+)(out). The catalysed reaction is a plastoquinone + NADPH + (n+1) H(+)(in) = a plastoquinol + NADP(+) + n H(+)(out). NDH-1 shuttles electrons from NAD(P)H, via FMN and iron-sulfur (Fe-S) centers, to quinones in the respiratory chain. The immediate electron acceptor for the enzyme in this species is believed to be plastoquinone. Couples the redox reaction to proton translocation (for every two electrons transferred, four hydrogen ions are translocated across the cytoplasmic membrane), and thus conserves the redox energy in a proton gradient. This is NAD(P)H-quinone oxidoreductase chain 4 from Synechococcus sp. (strain RCC307).